The primary structure comprises 265 residues: Tryptophan synthase alpha chain (265 aa).

Active-site proton acceptor residues include glutamate 49 and glutamate 60.

Belongs to the TrpA family. In terms of assembly, tetramer of two alpha and two beta chains.

The enzyme catalyses (1S,2R)-1-C-(indol-3-yl)glycerol 3-phosphate + L-serine = D-glyceraldehyde 3-phosphate + L-tryptophan + H2O. Its pathway is amino-acid biosynthesis; L-tryptophan biosynthesis; L-tryptophan from chorismate: step 5/5. Its function is as follows. The alpha subunit is responsible for the aldol cleavage of indoleglycerol phosphate to indole and glyceraldehyde 3-phosphate. The chain is Tryptophan synthase alpha chain from Janthinobacterium sp. (strain Marseille) (Minibacterium massiliensis).